The chain runs to 155 residues: MLP-like protein 423 (155 aa).

Belongs to the MLP family.

The polypeptide is MLP-like protein 423 (MLP423) (Arabidopsis thaliana (Mouse-ear cress)).